A 361-amino-acid chain; its full sequence is Peptide chain release factor 1 (361 aa).

At glutamine 236 the chain carries N5-methylglutamine. Residues 285-309 (NAKDSARAADRKAQVGSGDRSERIR) show a composition bias toward basic and acidic residues. Positions 285–312 (NAKDSARAADRKAQVGSGDRSERIRTYN) are disordered.

Belongs to the prokaryotic/mitochondrial release factor family. In terms of processing, methylated by PrmC. Methylation increases the termination efficiency of RF1.

The protein resides in the cytoplasm. Functionally, peptide chain release factor 1 directs the termination of translation in response to the peptide chain termination codons UAG and UAA. The protein is Peptide chain release factor 1 of Methylobacterium radiotolerans (strain ATCC 27329 / DSM 1819 / JCM 2831 / NBRC 15690 / NCIMB 10815 / 0-1).